Consider the following 209-residue polypeptide: uncharacterized protein (209 aa).

Catalysis depends on charge relay system residues Ser-119 and His-160.

This sequence belongs to the peptidase S51 family.

This is an uncharacterized protein from Listeria innocua serovar 6a (strain ATCC BAA-680 / CLIP 11262).